We begin with the raw amino-acid sequence, 485 residues long: Glutamyl-tRNA(Gln) amidotransferase subunit A (485 aa).

Catalysis depends on charge relay system residues Lys79 and Ser154. The active-site Acyl-ester intermediate is Ser178.

It belongs to the amidase family. GatA subfamily. In terms of assembly, heterotrimer of A, B and C subunits.

It catalyses the reaction L-glutamyl-tRNA(Gln) + L-glutamine + ATP + H2O = L-glutaminyl-tRNA(Gln) + L-glutamate + ADP + phosphate + H(+). Functionally, allows the formation of correctly charged Gln-tRNA(Gln) through the transamidation of misacylated Glu-tRNA(Gln) in organisms which lack glutaminyl-tRNA synthetase. The reaction takes place in the presence of glutamine and ATP through an activated gamma-phospho-Glu-tRNA(Gln). In Geobacillus stearothermophilus (Bacillus stearothermophilus), this protein is Glutamyl-tRNA(Gln) amidotransferase subunit A.